The chain runs to 501 residues: Zinc finger protein 704 (501 aa).

The segment covering 80–96 (SLKSTCNGGQRDGLTQG) has biased composition (polar residues). 3 disordered regions span residues 80–138 (SLKS…HTRS), 183–203 (PLVRSPPVKVSEGLNGSWKDG), and 216–267 (WSWS…LFDE). A compositionally biased stretch (basic and acidic residues) spans 115-137 (EEPRVLEHKRTGRALETEKDHTR). The C2H2-type zinc finger occupies 281 to 306 (FKCLWKNCGKVLSTAAGIQRHIRTVH). Disordered regions lie at residues 340–380 (SLSP…SRSA), 398–419 (PVTIPSTSSTGFTPSSSSFSIS), 427–446 (FTGTSASPTHSRTQGFGEQH), and 453–472 (LSSPPRAAGSLSRKSRGEGK). A compositionally biased stretch (low complexity) spans 368 to 380 (SESSSSTPLSRSA). A CR1 motif is present at residues 472 to 476 (KKCRK). The CR2 motif lies at 490–494 (CRWKK).

The protein resides in the nucleus. In terms of biological role, transcription factor. This chain is Zinc finger protein 704 (znf704), found in Danio rerio (Zebrafish).